We begin with the raw amino-acid sequence, 62 residues long: uncharacterized protein (62 aa).

This is an uncharacterized protein from Mesomycoplasma hyorhinis (Mycoplasma hyorhinis).